Reading from the N-terminus, the 367-residue chain is Di-N-acetylchitobiase (367 aa).

Residues 1–23 (MALSDLLELTLLLLLPLLERLSA) form the signal peptide. The 344-residue stretch at 24-367 (EDCPCSEASL…EMWGALRPRL (344 aa)) folds into the GH18 domain. Catalysis depends on Glu-128, which acts as the Proton donor. N-linked (GlcNAc...) asparagine glycosylation is found at Asn-178, Asn-213, Asn-247, and Asn-284.

This sequence belongs to the glycosyl hydrolase 18 family.

It is found in the lysosome. Its function is as follows. Involved in the degradation of asparagine-linked glycoproteins. Hydrolyze of N-acetyl-beta-D-glucosamine (1-4)N-acetylglucosamine chitobiose core from the reducing end of the bond, it requires prior cleavage by glycosylasparaginase. This chain is Di-N-acetylchitobiase (Ctbs), found in Rattus norvegicus (Rat).